Reading from the N-terminus, the 281-residue chain is Transcription factor bHLH79 (281 aa).

A disordered region spans residues 47-167 (FTRSEHSGNK…GQATDRHSLA (121 aa)). Basic and acidic residues-rich tracts occupy residues 77 to 88 (KTRDLNSEDDSS) and 138 to 152 (TEQK…DYIH). Residues 159-209 (QATDRHSLAERARREKISEKMTALQDIIPGCNKIIGKALVLDEIINYIQSL) form the bHLH domain.

As to quaternary structure, homodimer.

The protein localises to the nucleus. The chain is Transcription factor bHLH79 (BHLH79) from Arabidopsis thaliana (Mouse-ear cress).